The following is a 951-amino-acid chain: MGESSNVHEKSQAFYGPNLGYIIELYEQYLEDPSSVDEETRRYFDEFGAPETSTPTEVPVSGPSFDLEKVVSATRLINDIRAFGHKAADIYPLKDHPREQELFELSRYDLTEEDLKQIPARLLSDDAPKPNASALELFRHLLDVYTGTVAIELRHLDDMEEKKWIRRQVEQGALQQTFSKEEKIELFKRLAETELFESFLHKTYVGQKRFSIEGLDAMVPLLDAMVGGLISSGSEHINIGMAHRGRLNVLAHVLGKPYEMIFAEFQHAPNKELIPSEGSIGINFGWSGDVKYHLGLDRKVVEQQKEVRLNLANNPSHLEFVGSVVEGYTRAAQDDRSEKGSAVQHDDLAASILIHGDAAFPGQGIVAETLNMTNLTGYRTGGTVHVIANNTIGFTTDPNDSRSTRYASDIAKGYEIPVFHVNADDPEACVAVAKLISEYRAKFHKDILVDLIGYRRYGHNEMDEPMNTNPVLYKAIKGHQSVRHVYAARLEEEGVMTKDEKAQIEQKIEEALKAARDLVPSEEEDADIVLPDAVHKGFPKVDTSVEREFLTQLNEELLNWPEGFGVFHKLQKVLDRRRDAFSEGGKIDWGHAETLAFASILSDGTPVRLSGQDSERGTFAQRNIMLNDVESGKKFSPLHELSTAKASFSVYNSPLSEGSVLGFEYGYNVFAQDTLVLWEAQYGDFANSAQVMFDQFISAGRAKWGQKSGLVMLLPHGYEGQGPEHSSARMERYLTLAGEKNWTVANLSSAAQYFHILRRQAEMLGKEEIRPMIIMTPKSLLRHPLATSPVEAFTEESFKPIVEQPGLGENTEKVERLVFCTGKMAIDLAEAVGKSEESLDFLHIVRVEEIYPFPVREIRDVISRYPNAREIVWVQEEPKNMGAWTYIEPRLEAVTTNRLDVRYIGRRRRSSPAEGNPTAHKQEQARIIREALSRDVVSSGAGTSTYQKDRK.

The interval 906 to 925 (RRRRSSPAEGNPTAHKQEQA) is disordered.

The protein belongs to the alpha-ketoglutarate dehydrogenase family. In terms of assembly, homodimer. Part of the 2-oxoglutarate dehydrogenase (OGDH) complex composed of E1 (2-oxoglutarate dehydrogenase), E2 (dihydrolipoamide succinyltransferase) and E3 (dihydrolipoamide dehydrogenase); the complex contains multiple copies of the three enzymatic components (E1, E2 and E3). Thiamine diphosphate serves as cofactor.

The enzyme catalyses N(6)-[(R)-lipoyl]-L-lysyl-[protein] + 2-oxoglutarate + H(+) = N(6)-[(R)-S(8)-succinyldihydrolipoyl]-L-lysyl-[protein] + CO2. Functionally, E1 component of the 2-oxoglutarate dehydrogenase (OGDH) complex which catalyzes the decarboxylation of 2-oxoglutarate, the first step in the conversion of 2-oxoglutarate to succinyl-CoA and CO(2). The chain is 2-oxoglutarate dehydrogenase E1 component from Exiguobacterium sp. (strain ATCC BAA-1283 / AT1b).